The sequence spans 1940 residues: Rho GTPase-activating protein 32 (1940 aa).

Residues 154 to 248 (SKELVFLVQI…LTWMEIDNKG (95 aa)) enclose the PX; atypical domain. The region spanning 262–324 (PAIAAAHVIK…PSECVELIND (63 aa)) is the SH3 domain. Residues 375–570 (CDLGEHLLNS…FILNHVEVLF (196 aa)) form the Rho-GAP domain. Disordered stretches follow at residues 646 to 746 (FPSE…LSAS), 1035 to 1163 (RANQ…FSVT), 1219 to 1264 (FTTG…PPVR), 1430 to 1454 (KHPRSRNKPDYMPSMSPGVRSYTED), and 1675 to 1786 (RSRS…HSSA). Positions 1047–1061 (PQGASASESPQELSH) are enriched in polar residues. Low complexity-rich tracts occupy residues 1081–1094 (LALALAESAQQASA) and 1145–1163 (SRKTSPATPPSTTSSFSVT). Residues 1691–1707 (ETKDVRYPGRTEGDERT) are compositionally biased toward basic and acidic residues. The segment covering 1725–1734 (PQKQSGSSRS) has biased composition (polar residues). Residues 1736–1755 (MQHDISTEQHSQDTLHRQPS) show a composition bias toward basic and acidic residues.

The protein belongs to the PX domain-containing GAP family.

The protein resides in the cytoplasm. It localises to the membrane. The protein localises to the cell membrane. Its function is as follows. GTPase-activating protein (GAP) promoting GTP hydrolysis on RHOA, CDC42 and RAC1 small GTPases. This is Rho GTPase-activating protein 32 (arhgap32) from Xenopus laevis (African clawed frog).